A 604-amino-acid chain; its full sequence is Serine/threonine-protein kinase A-Raf (604 aa).

The RBD domain occupies 19 to 91 (GTVKVYLPNK…DGEELIVEVL (73 aa)). Residues 98-144 (MHNFVRKTFFSLAFCDFCLKFLFHGFRCQTCGYKFHQHCSSKVPTVC) form a Phorbol-ester/DAG-type zinc finger. Zn(2+)-binding residues include H99, C112, C115, C125, C128, H133, C136, and C144. Phosphoserine occurs at positions 157 and 162. Disordered stretches follow at residues 177–222 (NELL…HMVS) and 241–288 (TDAA…EKKK). Phosphothreonine is present on T181. Position 186 is a phosphoserine (S186). The segment covering 210–222 (IRSTSTPNVHMVS) has biased composition (polar residues). Low complexity predominate over residues 252–265 (PRGSPSPASVSSGR). Phosphoserine is present on residues S255 and S267. A compositionally biased stretch (basic and acidic residues) spans 272–287 (LPSEQRERKSLADEKK). The Protein kinase domain maps to 308-568 (VQLLKRIGTG…PQILATIELL (261 aa)). Residues 314 to 322 (IGTGSFGTV) and K334 each bind ATP. T316 carries the phosphothreonine modification. D427 functions as the Proton acceptor in the catalytic mechanism.

This sequence belongs to the protein kinase superfamily. TKL Ser/Thr protein kinase family. RAF subfamily. As to quaternary structure, interacts with TH1L/NELFD. Zn(2+) serves as cofactor. In terms of processing, dephosphorylation by the SHOC2-MRAS-PP1c (SMP) complex consisting of SHOC2, GTP-bound M-Ras/MRAS and the catalytic subunit of protein phosphatase 1 (PPP1CA, PPP1CB or PPP1CC); this relieves inactivation and stimulates kinase activity.

It carries out the reaction L-seryl-[protein] + ATP = O-phospho-L-seryl-[protein] + ADP + H(+). The catalysed reaction is L-threonyl-[protein] + ATP = O-phospho-L-threonyl-[protein] + ADP + H(+). Functionally, involved in the transduction of mitogenic signals from the cell membrane to the nucleus. May also regulate the TOR signaling cascade. Phosphorylates PFKFB2. This Mus musculus (Mouse) protein is Serine/threonine-protein kinase A-Raf (Araf).